Consider the following 881-residue polypeptide: Tyrosine-protein kinase receptor TYRO3 (881 aa).

An N-terminal signal peptide occupies residues 1-28; sequence MVNPGPPGLIAGLLLAALSLSSVDGTKA. Ig-like C2-type domains lie at 29-114 and 125-206; these read LGFV…KSVS and PYFT…AIVE. At 29 to 414 the chain is on the extracellular side; it reads LGFVGHGYNM…QRHPHTRMSW (386 aa). 2 N-linked (GlcNAc...) asparagine glycosylation sites follow: asparagine 37 and asparagine 49. A disulfide bond links cysteine 50 and cysteine 103. Asparagine 143 carries N-linked (GlcNAc...) asparagine glycosylation. Residues cysteine 146 and cysteine 189 are joined by a disulfide bond. 2 consecutive Fibronectin type-III domains span residues 213-306 and 311-401; these read PPFN…TKEK and IPQN…SKEE. Residues asparagine 216, asparagine 279, asparagine 351, and asparagine 365 are each glycosylated (N-linked (GlcNAc...) asparagine). The chain crosses the membrane as a helical span at residues 415-435; it reads VPMVLGILTALVTVVAMTLIF. The Cytoplasmic segment spans residues 436–881; that stretch reads LRKGRKETRF…MQEEQVVITL (446 aa). The 272-residue stretch at 503 to 774 folds into the Protein kinase domain; that stretch reads FTLGRTLGKG…VDLKRRLEAI (272 aa). ATP-binding positions include 509 to 517 and lysine 535; that span reads LGKGEFGSV. Aspartate 640 serves as the catalytic Proton acceptor. Position 671 is a phosphotyrosine; by autocatalysis (tyrosine 671). A disordered region spans residues 846 to 881; that stretch reads EWSSSAQNGEARGLLHEEEEEEEEEEMQEEQVVITL. The span at 862–874 shows a compositional bias: acidic residues; that stretch reads EEEEEEEEEEMQE.

The protein belongs to the protein kinase superfamily. Tyr protein kinase family. AXL/UFO subfamily. Tyrosine phosphorylated upon receptor stimulation.

It localises to the cell membrane. The catalysed reaction is L-tyrosyl-[protein] + ATP = O-phospho-L-tyrosyl-[protein] + ADP + H(+). Functionally, may be involved in cell adhesion processes, particularly in the central nervous system. The sequence is that of Tyrosine-protein kinase receptor TYRO3 (tyro3) from Xenopus tropicalis (Western clawed frog).